We begin with the raw amino-acid sequence, 120 residues long: NAD(P)H-quinone oxidoreductase subunit 3 (120 aa).

3 helical membrane passes run 10–30, 64–84, and 89–109; these read LLVF…ASAL, MFAL…PWAV, and LGLL…VGLV.

This sequence belongs to the complex I subunit 3 family. As to quaternary structure, NDH-1 can be composed of about 15 different subunits; different subcomplexes with different compositions have been identified which probably have different functions.

It localises to the cellular thylakoid membrane. It catalyses the reaction a plastoquinone + NADH + (n+1) H(+)(in) = a plastoquinol + NAD(+) + n H(+)(out). The enzyme catalyses a plastoquinone + NADPH + (n+1) H(+)(in) = a plastoquinol + NADP(+) + n H(+)(out). Functionally, NDH-1 shuttles electrons from an unknown electron donor, via FMN and iron-sulfur (Fe-S) centers, to quinones in the respiratory and/or the photosynthetic chain. The immediate electron acceptor for the enzyme in this species is believed to be plastoquinone. Couples the redox reaction to proton translocation, and thus conserves the redox energy in a proton gradient. Cyanobacterial NDH-1 also plays a role in inorganic carbon-concentration. The polypeptide is NAD(P)H-quinone oxidoreductase subunit 3 (Synechococcus sp. (strain JA-2-3B'a(2-13)) (Cyanobacteria bacterium Yellowstone B-Prime)).